Consider the following 114-residue polypeptide: Ribonuclease P protein component (114 aa).

It belongs to the RnpA family. In terms of assembly, consists of a catalytic RNA component (M1 or rnpB) and a protein subunit.

It carries out the reaction Endonucleolytic cleavage of RNA, removing 5'-extranucleotides from tRNA precursor.. Functionally, RNaseP catalyzes the removal of the 5'-leader sequence from pre-tRNA to produce the mature 5'-terminus. It can also cleave other RNA substrates such as 4.5S RNA. The protein component plays an auxiliary but essential role in vivo by binding to the 5'-leader sequence and broadening the substrate specificity of the ribozyme. This chain is Ribonuclease P protein component, found in Alkaliphilus oremlandii (strain OhILAs) (Clostridium oremlandii (strain OhILAs)).